A 467-amino-acid chain; its full sequence is Nuclear distribution protein nudF (467 aa).

The region spanning 9-41 is the LisH domain; sequence QAEELHKSIIAYLASVNLTESSAALRAELGDSV. The stretch at 60-87 forms a coiled coil; sequence TSVVRLQKKIMDLESRCAALQSELDSAT. 8 WD repeats span residues 113 to 154, 156 to 196, 200 to 247, 250 to 289, 292 to 352, 354 to 393, 398 to 428, and 429 to 466; these read GHRN…RTVK, HTKA…KNIR, GHDH…CVKT, GHVDWVRAVAPSIDGRFLLAAGDDRIPRLWDLSSAETKST, GHEH…IKTL, GHDNWVRALAFHPGGKHLLSVADDKTIRCWDLTQECKCVR, AHGHFVTCLRWAPPLIKDGGANGEAETNGTP, and AATSTTNGVRPDPNVATKISIRCVIATGSVDQKVRIFA. The interval 417-439 is disordered; sequence GANGEAETNGTPAATSTTNGVRP. The span at 422–436 shows a compositional bias: polar residues; that stretch reads AETNGTPAATSTTNG.

It belongs to the WD repeat LIS1/nudF family. Self-associates. Interacts with nudE and dynein.

It localises to the cytoplasm. Its subcellular location is the cytoskeleton. It is found in the spindle pole. Its function is as follows. Positively regulates the activity of the minus-end directed microtubule motor protein dynein. May enhance dynein-mediated microtubule sliding by targeting dynein to the microtubule plus end. Required for nuclear migration during vegetative growth as well as development. Required for retrograde early endosome (EE) transport from the hyphal tip. Required for localization of dynein to the mitotic spindle poles. Recruits additional proteins to the dynein complex at SPBs. The polypeptide is Nuclear distribution protein nudF (Aspergillus fumigatus (strain CBS 144.89 / FGSC A1163 / CEA10) (Neosartorya fumigata)).